Consider the following 285-residue polypeptide: Tropomyosin alpha-3 chain (285 aa).

The stretch at 1–285 (MMEAIKKKMQ…DHALNDMTSI (285 aa)) forms a coiled coil. Methionine 2 bears the N-acetylmethionine mark. Methionine 2 is modified (N-acetylalanine). At threonine 54 the chain carries Phosphothreonine. Residues serine 62 and serine 88 each carry the phosphoserine modification. Threonine 109 carries the post-translational modification Phosphothreonine. Serine 207 and serine 216 each carry phosphoserine. Residue isoleucine 228 is modified to N6-acetyllysine. Threonine 253 carries the phosphothreonine modification. Residue tyrosine 262 is modified to Phosphotyrosine. Phosphoserine is present on serine 272. Phosphothreonine is present on threonine 283. Serine 284 carries the phosphoserine modification.

The protein belongs to the tropomyosin family. Homodimer. Heterodimer of an alpha (TPM1, TPM3 or TPM4) and a beta (TPM2) chain. Interacts with TMOD1. Interacts with TNNT1.

The protein localises to the cytoplasm. The protein resides in the cytoskeleton. In terms of biological role, binds to actin filaments in muscle and non-muscle cells. Plays a central role, in association with the troponin complex, in the calcium dependent regulation of vertebrate striated muscle contraction. Smooth muscle contraction is regulated by interaction with caldesmon. In non-muscle cells is implicated in stabilizing cytoskeleton actin filaments. The polypeptide is Tropomyosin alpha-3 chain (Tpm3) (Mus musculus (Mouse)).